We begin with the raw amino-acid sequence, 84 residues long: MKMRVHLLAVSVLLVVLALQTTPAEADINSEMATCACQLIYRPVCASNNESYSNECVLKCASETPTGRSIGLHKVKDGNCNGEF.

The N-terminal stretch at M1–A26 is a signal peptide. The Kazal-like domain maps to N29–G82. Cystine bridges form between C35–C60, C37–C56, and C45–C80. N49 carries N-linked (GlcNAc...) asparagine glycosylation.

In terms of assembly, interacts with human ELANE.

The protein localises to the secreted. Functions as a slow and tight inhibitor of host neutrophil elastase (ELANE). Inhibits host proteinase 3 (PRTN3) and chymotrypsin. Does not inhibit other host proteases involved in coagulation or inflammation, such as cathepsin G (CTSG), trypsin, chymase, matriptase, beta-tryptase, kallikrein, urokinase-type plasminogen activator (PLAU), coagulation factors Xa (F10), XIa (F11), XIIa (F12), plasmin (PLG), thrombin (F2) and tissue-type plasminogen activator (PLAT). Inhibits host neutrophil chemotaxis induced by N-formylmethionine-leucyl-phenylalanine (fMLP) in vitro. Inhibits ELANE-mediated potentiation of platelet aggregation induced by CTSG in the host. Does not affect CTSG- or collagen-induced platelet aggregation. Blocks cleavage of tissue factor pathway inhibitor (TFPI) by ELANE in the host. Inhibits neutrophil-induced coagulation in the host by interfering with neutrophil extracellular traps (NET) formation. Exhibits anti-inflammatory activity. Reduces ischemia-induced activation of MAPK and NF-kappa-B pathways in the host. Decreases CCL2 and IL8 production in IL4- or lipopolysaccharide (LPS)-stimulated host epithelial cells. Reduces caspase-3 (CASP3)-dependent apoptosis in damaged host tissues. This is Agaphelin from Anopheles gambiae (African malaria mosquito).